A 206-amino-acid polypeptide reads, in one-letter code: Guanylate kinase (206 aa).

In terms of domain architecture, Guanylate kinase-like spans 13 to 193 (PLLLVVSGPS…AVSEIMSIIS (181 aa)). An ATP-binding site is contributed by 20–27 (GPSGVGKD).

This sequence belongs to the guanylate kinase family.

It is found in the cytoplasm. The enzyme catalyses GMP + ATP = GDP + ADP. Its function is as follows. Essential for recycling GMP and indirectly, cGMP. This is Guanylate kinase from Dehalococcoides mccartyi (strain ATCC BAA-2266 / KCTC 15142 / 195) (Dehalococcoides ethenogenes (strain 195)).